Consider the following 59-residue polypeptide: UPF0434 protein plu1633 (59 aa).

Belongs to the UPF0434 family.

The polypeptide is UPF0434 protein plu1633 (Photorhabdus laumondii subsp. laumondii (strain DSM 15139 / CIP 105565 / TT01) (Photorhabdus luminescens subsp. laumondii)).